The primary structure comprises 224 residues: Thiamine-phosphate synthase (224 aa).

Residues 44 to 48 (QFREK) and Asn79 contribute to the 4-amino-2-methyl-5-(diphosphooxymethyl)pyrimidine site. Residues Asp80 and Asp99 each contribute to the Mg(2+) site. Residue Ser117 coordinates 4-amino-2-methyl-5-(diphosphooxymethyl)pyrimidine. Position 143–145 (143–145 (TST)) interacts with 2-[(2R,5Z)-2-carboxy-4-methylthiazol-5(2H)-ylidene]ethyl phosphate. Lys146 contacts 4-amino-2-methyl-5-(diphosphooxymethyl)pyrimidine. 2-[(2R,5Z)-2-carboxy-4-methylthiazol-5(2H)-ylidene]ethyl phosphate is bound by residues Gly175 and 195–196 (IS).

Belongs to the thiamine-phosphate synthase family. Requires Mg(2+) as cofactor.

The catalysed reaction is 2-[(2R,5Z)-2-carboxy-4-methylthiazol-5(2H)-ylidene]ethyl phosphate + 4-amino-2-methyl-5-(diphosphooxymethyl)pyrimidine + 2 H(+) = thiamine phosphate + CO2 + diphosphate. It catalyses the reaction 2-(2-carboxy-4-methylthiazol-5-yl)ethyl phosphate + 4-amino-2-methyl-5-(diphosphooxymethyl)pyrimidine + 2 H(+) = thiamine phosphate + CO2 + diphosphate. It carries out the reaction 4-methyl-5-(2-phosphooxyethyl)-thiazole + 4-amino-2-methyl-5-(diphosphooxymethyl)pyrimidine + H(+) = thiamine phosphate + diphosphate. Its pathway is cofactor biosynthesis; thiamine diphosphate biosynthesis; thiamine phosphate from 4-amino-2-methyl-5-diphosphomethylpyrimidine and 4-methyl-5-(2-phosphoethyl)-thiazole: step 1/1. In terms of biological role, condenses 4-methyl-5-(beta-hydroxyethyl)thiazole monophosphate (THZ-P) and 2-methyl-4-amino-5-hydroxymethyl pyrimidine pyrophosphate (HMP-PP) to form thiamine monophosphate (TMP). In Bacillus cereus (strain ATCC 10987 / NRS 248), this protein is Thiamine-phosphate synthase.